The primary structure comprises 209 residues: FMN-dependent NADH:quinone oxidoreductase (209 aa).

Residues serine 10, 16-18, and 98-101 each bind FMN; these read SHS and MWNF.

It belongs to the azoreductase type 1 family. In terms of assembly, homodimer. It depends on FMN as a cofactor.

The catalysed reaction is 2 a quinone + NADH + H(+) = 2 a 1,4-benzosemiquinone + NAD(+). The enzyme catalyses N,N-dimethyl-1,4-phenylenediamine + anthranilate + 2 NAD(+) = 2-(4-dimethylaminophenyl)diazenylbenzoate + 2 NADH + 2 H(+). Quinone reductase that provides resistance to thiol-specific stress caused by electrophilic quinones. Functionally, also exhibits azoreductase activity. Catalyzes the reductive cleavage of the azo bond in aromatic azo compounds to the corresponding amines. This Nitratidesulfovibrio vulgaris (strain ATCC 29579 / DSM 644 / CCUG 34227 / NCIMB 8303 / VKM B-1760 / Hildenborough) (Desulfovibrio vulgaris) protein is FMN-dependent NADH:quinone oxidoreductase.